The following is a 235-amino-acid chain: Phosphoribosylformylglycinamidine synthase subunit PurQ (235 aa).

The 231-residue stretch at 4–234 folds into the Glutamine amidotransferase type-1 domain; the sequence is GILVFPGTNC…VQHLTGRVIR (231 aa). Cys-86 functions as the Nucleophile in the catalytic mechanism. Active-site residues include His-203 and Glu-205.

Part of the FGAM synthase complex composed of 1 PurL, 1 PurQ and 2 PurS subunits.

The protein localises to the cytoplasm. It carries out the reaction N(2)-formyl-N(1)-(5-phospho-beta-D-ribosyl)glycinamide + L-glutamine + ATP + H2O = 2-formamido-N(1)-(5-O-phospho-beta-D-ribosyl)acetamidine + L-glutamate + ADP + phosphate + H(+). It catalyses the reaction L-glutamine + H2O = L-glutamate + NH4(+). Its pathway is purine metabolism; IMP biosynthesis via de novo pathway; 5-amino-1-(5-phospho-D-ribosyl)imidazole from N(2)-formyl-N(1)-(5-phospho-D-ribosyl)glycinamide: step 1/2. Functionally, part of the phosphoribosylformylglycinamidine synthase complex involved in the purines biosynthetic pathway. Catalyzes the ATP-dependent conversion of formylglycinamide ribonucleotide (FGAR) and glutamine to yield formylglycinamidine ribonucleotide (FGAM) and glutamate. The FGAM synthase complex is composed of three subunits. PurQ produces an ammonia molecule by converting glutamine to glutamate. PurL transfers the ammonia molecule to FGAR to form FGAM in an ATP-dependent manner. PurS interacts with PurQ and PurL and is thought to assist in the transfer of the ammonia molecule from PurQ to PurL. The sequence is that of Phosphoribosylformylglycinamidine synthase subunit PurQ from Symbiobacterium thermophilum (strain DSM 24528 / JCM 14929 / IAM 14863 / T).